Consider the following 315-residue polypeptide: HPr kinase/phosphorylase (315 aa).

Active-site residues include His140 and Lys161. Position 155-162 (Gly155–Ser162) interacts with ATP. Position 162 (Ser162) interacts with Mg(2+). Asp179 functions as the Proton acceptor; for phosphorylation activity. Proton donor; for dephosphorylation activity in the catalytic mechanism. The tract at residues Leu203 to Asp212 is important for the catalytic mechanism of both phosphorylation and dephosphorylation. Residue Glu204 coordinates Mg(2+). Residue Arg245 is part of the active site. The segment at Pro266 to Arg271 is important for the catalytic mechanism of dephosphorylation.

Belongs to the HPrK/P family. Homohexamer. Requires Mg(2+) as cofactor.

It carries out the reaction [HPr protein]-L-serine + ATP = [HPr protein]-O-phospho-L-serine + ADP + H(+). It catalyses the reaction [HPr protein]-O-phospho-L-serine + phosphate + H(+) = [HPr protein]-L-serine + diphosphate. In terms of biological role, catalyzes the ATP- as well as the pyrophosphate-dependent phosphorylation of a specific serine residue in HPr, a phosphocarrier protein of the phosphoenolpyruvate-dependent sugar phosphotransferase system (PTS). HprK/P also catalyzes the pyrophosphate-producing, inorganic phosphate-dependent dephosphorylation (phosphorolysis) of seryl-phosphorylated HPr (P-Ser-HPr). The two antagonistic activities of HprK/P are regulated by several intracellular metabolites, which change their concentration in response to the absence or presence of rapidly metabolisable carbon sources (glucose, fructose, etc.) in the growth medium. Therefore, by controlling the phosphorylation state of HPr, HPrK/P is a sensor enzyme that plays a major role in the regulation of carbon metabolism and sugar transport: it mediates carbon catabolite repression (CCR), and regulates PTS-catalyzed carbohydrate uptake and inducer exclusion. The sequence is that of HPr kinase/phosphorylase from Lactiplantibacillus plantarum (strain ATCC BAA-793 / NCIMB 8826 / WCFS1) (Lactobacillus plantarum).